Reading from the N-terminus, the 292-residue chain is DSC E3 ubiquitin ligase complex subunit 3 (292 aa).

At 1–243 the chain is on the extracellular side; it reads MSAEPLLPTH…PIANIKHNKD (243 aa). Residues Asn-11, Asn-41, Asn-77, Asn-99, and Asn-145 are each glycosylated (N-linked (GlcNAc...) asparagine). Residues 244 to 264 traverse the membrane as a helical segment; it reads LLLGICVGFFFGVFGILLMKF. The Cytoplasmic segment spans residues 265–273; the sequence is DGLFNRRQK. A helical membrane pass occupies residues 274 to 291; it reads MAIFAGVIVNVMFCLVRG. Residue Phe-292 is a topological domain, extracellular.

Belongs to the dsc3 family. As to quaternary structure, component of the DSC E3 ligase complexes composed of at least TUL1, DSC2, DSC3, UBX3, CDC48 as well as VLD1 for the vacuole-localized complex or GLD1 for the Golgi/endosome-localized complex.

The protein resides in the endoplasmic reticulum membrane. Functionally, component of the DSC E3 ubiquitin ligase complexes that tag proteins present in Golgi, endosome and vacuole membranes and function in protein homeostasis under non-stress conditions and support a role in protein quality control. Involved in endocytic protein trafficking. The protein is DSC E3 ubiquitin ligase complex subunit 3 of Saccharomyces cerevisiae (strain ATCC 204508 / S288c) (Baker's yeast).